Here is a 1892-residue protein sequence, read N- to C-terminus: Protein TIC 214 (1892 aa).

The next 6 helical transmembrane spans lie at Ile18–Gly38, Phe64–Leu84, Pro87–His107, Leu124–Leu144, Val172–Ile192, and Ile221–Ile241. Disordered regions lie at residues Ser250–Asp300, Arg794–Arg814, and Arg1581–Val1609. The segment covering Val256–Thr268 has biased composition (acidic residues). Basic and acidic residues predominate over residues Arg1581–Asn1602.

The protein belongs to the TIC214 family. As to quaternary structure, part of the Tic complex.

It localises to the plastid. The protein localises to the chloroplast inner membrane. In terms of biological role, involved in protein precursor import into chloroplasts. May be part of an intermediate translocation complex acting as a protein-conducting channel at the inner envelope. This is Protein TIC 214 from Nicotiana tomentosiformis (Tobacco).